We begin with the raw amino-acid sequence, 270 residues long: Acetylglutamate kinase (270 aa).

Residues 53 to 54 (GG), Arg75, and Asn167 contribute to the substrate site.

The protein belongs to the acetylglutamate kinase family. ArgB subfamily.

Its subcellular location is the cytoplasm. The catalysed reaction is N-acetyl-L-glutamate + ATP = N-acetyl-L-glutamyl 5-phosphate + ADP. The protein operates within amino-acid biosynthesis; L-arginine biosynthesis; N(2)-acetyl-L-ornithine from L-glutamate: step 2/4. Functionally, catalyzes the ATP-dependent phosphorylation of N-acetyl-L-glutamate. This Shewanella halifaxensis (strain HAW-EB4) protein is Acetylglutamate kinase.